The sequence spans 325 residues: Probable tRNA pseudouridine synthase B (325 aa).

Asp69 (nucleophile) is an active-site residue. The PUA domain occupies Leu236–Met311.

It belongs to the pseudouridine synthase TruB family. Type 2 subfamily.

The enzyme catalyses uridine(55) in tRNA = pseudouridine(55) in tRNA. In terms of biological role, could be responsible for synthesis of pseudouridine from uracil-55 in the psi GC loop of transfer RNAs. In Archaeoglobus fulgidus (strain ATCC 49558 / DSM 4304 / JCM 9628 / NBRC 100126 / VC-16), this protein is Probable tRNA pseudouridine synthase B.